We begin with the raw amino-acid sequence, 490 residues long: Betaine aldehyde dehydrogenase (490 aa).

A K(+)-binding site is contributed by Asp93. 150-152 (GAW) is a binding site for NAD(+). The active-site Charge relay system is the Lys162. 176–179 (KPSE) provides a ligand contact to NAD(+). Val180 is a K(+) binding site. Position 230-233 (230-233 (GIAS)) interacts with NAD(+). A K(+)-binding site is contributed by Leu246. The active-site Proton acceptor is the Glu252. NAD(+) is bound by residues Gly254, Cys286, and Glu387. The active-site Nucleophile is Cys286. Cys286 is subject to Cysteine sulfenic acid (-SOH). 2 residues coordinate K(+): Lys457 and Gly460. Residue Glu464 is the Charge relay system of the active site.

This sequence belongs to the aldehyde dehydrogenase family. In terms of assembly, dimer of dimers. The cofactor is K(+).

The enzyme catalyses betaine aldehyde + NAD(+) + H2O = glycine betaine + NADH + 2 H(+). The protein operates within amine and polyamine biosynthesis; betaine biosynthesis via choline pathway; betaine from betaine aldehyde: step 1/1. Involved in the biosynthesis of the osmoprotectant glycine betaine. Catalyzes the irreversible oxidation of betaine aldehyde to the corresponding acid. This is Betaine aldehyde dehydrogenase from Yersinia pseudotuberculosis serotype I (strain IP32953).